A 276-amino-acid polypeptide reads, in one-letter code: Phospholipid phosphatase 2 (276 aa).

Over 1-4 (MERR) the chain is Cytoplasmic. The helical transmembrane segment at 5–25 (WVFVLLDVLCVLVASLPFIIL) threads the bilayer. Residues 26 to 51 (TLVNAPYKRGFYCGDDSIRYPYRPDT) are Lumenal-facing. Residues 52–72 (ITHGLMAGVIITATVVLVSSG) form a helical membrane-spanning segment. Residues 73–87 (EAYLVYTDRLYSRSD) are Cytoplasmic-facing. A helical transmembrane segment spans residues 88 to 108 (FNNYVAAIYKVLGTFLFGAAV). Topologically, residues 109-161 (SQSLTDLAKYMIGRLRPSFLAVCDPDWSRVNCSGYVQVEVCRGSPANVTEARL) are lumenal. The segment at 117-125 (KYMIGRLRP) is phosphatase sequence motif I. Asn139 and Asn155 each carry an N-linked (GlcNAc...) asparagine glycan. The chain crosses the membrane as a helical span at residues 162–182 (SFYSGHSSFGMYCMLFLALYV). Positions 164–167 (YSGH) are phosphatase sequence motif II. His167 serves as the catalytic Proton donors. Residues 183–189 (QARLCWK) are Cytoplasmic-facing. A helical transmembrane segment spans residues 190-210 (WARLLRPTVQFFLVAFAIYVG). Over 211–225 (YTRVSDNKHHWSDVL) the chain is Lumenal. The segment at 212–223 (TRVSDNKHHWSD) is phosphatase sequence motif III. The Nucleophile role is filled by His219. The chain crosses the membrane as a helical span at residues 226–246 (VGLLQGALVACLTVCYVSDFF). Over 247–276 (KSRPPQSCQENEESERKPSLSLTLTLGDRP) the chain is Cytoplasmic. The tract at residues 252-276 (QSCQENEESERKPSLSLTLTLGDRP) is disordered.

It belongs to the PA-phosphatase related phosphoesterase family. As to quaternary structure, forms functional homodimers and homooligomers. Can also form heterooligomers with PLPP1 and PLPP3. N-glycosylated. Expressed in the brain.

Its subcellular location is the membrane. It is found in the cell membrane. The protein localises to the early endosome membrane. It localises to the endoplasmic reticulum membrane. The enzyme catalyses a 1,2-diacyl-sn-glycero-3-phosphate + H2O = a 1,2-diacyl-sn-glycerol + phosphate. It carries out the reaction 1,2-dihexadecanoyl-sn-glycero-3-phosphate + H2O = 1,2-dihexadecanoyl-sn-glycerol + phosphate. It catalyses the reaction 1,2-di-(9Z-octadecenoyl)-sn-glycero-3-phosphate + H2O = 1,2-di-(9Z-octadecenoyl)-sn-glycerol + phosphate. The catalysed reaction is a monoacyl-sn-glycero-3-phosphate + H2O = a monoacylglycerol + phosphate. The enzyme catalyses (9Z)-octadecenoyl-sn-glycero-3-phosphate + H2O = (9Z-octadecenoyl)-glycerol + phosphate. It carries out the reaction sphing-4-enine 1-phosphate + H2O = sphing-4-enine + phosphate. It catalyses the reaction an N-acylsphing-4-enine 1-phosphate + H2O = an N-acylsphing-4-enine + phosphate. The catalysed reaction is N-(octanoyl)-sphing-4-enine-1-phosphate + H2O = N-octanoylsphing-4-enine + phosphate. The enzyme catalyses N-(9Z-octadecenoyl)-ethanolamine phosphate + H2O = N-(9Z-octadecenoyl) ethanolamine + phosphate. The protein operates within lipid metabolism; phospholipid metabolism. With respect to regulation, magnesium-independent phospholipid phosphatase. Insensitive to N-ethylmaleimide. Its function is as follows. Magnesium-independent phospholipid phosphatase that catalyzes the dephosphorylation of a variety of glycerolipid and sphingolipid phosphate esters including phosphatidate/PA, lysophosphatidate/LPA, sphingosine 1-phosphate/S1P and ceramide 1-phosphate/C1P. Has no apparent extracellular phosphatase activity and therefore most probably acts intracellularly. Also acts on N-oleoyl ethanolamine phosphate/N-(9Z-octadecenoyl)-ethanolamine phosphate, a potential physiological compound. Through dephosphorylation of these bioactive lipid mediators produces new bioactive compounds and may regulate signal transduction in different cellular processes. Indirectly regulates, for instance, cell cycle G1/S phase transition through its phospholipid phosphatase activity. This is Phospholipid phosphatase 2 from Rattus norvegicus (Rat).